A 561-amino-acid chain; its full sequence is Interleukin-1 receptor-like 2 (561 aa).

The signal sequence occupies residues 1-21 (MGMPPLLFCWVSFVLPLFVAA). 3 Ig-like C2-type domains span residues 22-113 (GNCT…INLT), 128-215 (SINS…VRNY), and 225-321 (SGGR…TCHA). The Extracellular segment spans residues 22 to 338 (GNCTDVYMHH…ILKRPAPDFR (317 aa)). 5 N-linked (GlcNAc...) asparagine glycosylation sites follow: asparagine 23, asparagine 43, asparagine 55, asparagine 111, and asparagine 130. A disulfide bond links cysteine 44 and cysteine 97. Cysteines 149 and 199 form a disulfide. N-linked (GlcNAc...) asparagine glycosylation is found at asparagine 231, asparagine 237, asparagine 253, asparagine 269, asparagine 290, and asparagine 302. Residues cysteine 252 and cysteine 319 are joined by a disulfide bond. A helical membrane pass occupies residues 339–358 (AYLIGGLMAFLLLAVSILYI). Over 359-561 (YNTFKVDIVL…LLGHTPRIPG (203 aa)) the chain is Cytoplasmic. The TIR domain maps to 384-539 (KLYDAYVLYP…KFWKKVRYHM (156 aa)). Residue glutamate 470 is part of the active site.

The protein belongs to the interleukin-1 receptor family. As to quaternary structure, interacts with IL1RAP; the association is enhanced by IL36B indicative for an functional signaling complex and inhibited by IL36RN. In terms of tissue distribution, predominant expression in the lung and epididymis, with lower expression in cerebral cortex and testis. Expression in the brain is non-neuronal and associated with the cerebral vasculature. Not detected in any cell line tested.

Its subcellular location is the membrane. The enzyme catalyses NAD(+) + H2O = ADP-D-ribose + nicotinamide + H(+). Receptor for interleukin-36 (IL36A, IL36B and IL36G). After binding to interleukin-36 associates with the coreceptor IL1RAP to form the interleukin-36 receptor complex which mediates interleukin-36-dependent activation of NF-kappa-B, MAPK and other pathways. The IL-36 signaling system is thought to be present in epithelial barriers and to take part in local inflammatory response; it is similar to the IL-1 system. Seems to be involved in skin inflammatory response by induction of the IL-23/IL-17/IL-22 pathway. Receptor for the interleukin IL36G. Binding to the agonist leads to the activation of NF-kappa-B. The sequence is that of Interleukin-1 receptor-like 2 (Il1rl2) from Rattus norvegicus (Rat).